The primary structure comprises 281 residues: Ribonuclease HII (281 aa).

A disordered region spans residues 1–46 (MIRDTKQPIKVPAKPASRSGGKAKTVKPKTIKPKTSAKAAAAKPAS). Residues 33–46 (PKTSAKAAAAKPAS) are compositionally biased toward low complexity. The 189-residue stretch at 73 to 261 (WPIAGCDEAG…VAAAWQKIEG (189 aa)) folds into the RNase H type-2 domain. Positions 79, 80, and 170 each coordinate a divalent metal cation.

This sequence belongs to the RNase HII family. Requires Mn(2+) as cofactor. Mg(2+) is required as a cofactor.

It is found in the cytoplasm. The enzyme catalyses Endonucleolytic cleavage to 5'-phosphomonoester.. Endonuclease that specifically degrades the RNA of RNA-DNA hybrids. The protein is Ribonuclease HII of Rhodopseudomonas palustris (strain TIE-1).